The sequence spans 391 residues: MSLNPRDVVIVDFGRTPMGRSKGGMHRNTRAEDMSAHLISKLLERNDKVDPKEVEDVIWGCVNQTLEQGWNIARMASLMTQIPHTSAAQTVSRLCGSSMSALHTAAQAIMTGNGDVFVVGGVEHMGHVSMMHGVDPNPHLSLHAAKASGMMGLTAEMLGKMHGITREQQDLFGLRSHQLAHKATVEGKFKDEIIPMQGYDENGFLKVFDFDETIRPETTLEGLASLKPAFNPKGGTVTAGTSSQITDGASCMVVMSGQRAMDLGIQPLAVIRSMAVAGVDPAIMGYGPVPSTQKALKRAGLTMADIDFIELNEAFAAQALPVLKDLKVLDKMDEKVNLHGGAIALGHPFGCSGARISGTLLNVMKQNGGTLGVATMCVGLGQGITTVFERI.

The active-site Acyl-thioester intermediate is Cys95. Catalysis depends on proton acceptor residues His347 and Cys377.

This sequence belongs to the thiolase-like superfamily. Thiolase family. Heterotetramer of two alpha chains (FadB) and two beta chains (FadA).

The protein resides in the cytoplasm. It catalyses the reaction an acyl-CoA + acetyl-CoA = a 3-oxoacyl-CoA + CoA. The protein operates within lipid metabolism; fatty acid beta-oxidation. Functionally, catalyzes the final step of fatty acid oxidation in which acetyl-CoA is released and the CoA ester of a fatty acid two carbons shorter is formed. This chain is 3-ketoacyl-CoA thiolase, found in Ectopseudomonas oleovorans (Pseudomonas oleovorans).